Consider the following 130-residue polypeptide: Small ribosomal subunit protein uS9 (130 aa).

A disordered region spans residues 111 to 130; that stretch reads KERRKYGLKKARKAPQFSKR.

Belongs to the universal ribosomal protein uS9 family.

This is Small ribosomal subunit protein uS9 from Thermoanaerobacter sp. (strain X514).